We begin with the raw amino-acid sequence, 505 residues long: Histidine ammonia-lyase (505 aa).

The 5-imidazolinone (Ala-Gly) cross-link spans 141-143 (ASG). Ser142 carries the post-translational modification 2,3-didehydroalanine (Ser).

The protein belongs to the PAL/histidase family. Post-translationally, contains an active site 4-methylidene-imidazol-5-one (MIO), which is formed autocatalytically by cyclization and dehydration of residues Ala-Ser-Gly.

Its subcellular location is the cytoplasm. The catalysed reaction is L-histidine = trans-urocanate + NH4(+). It participates in amino-acid degradation; L-histidine degradation into L-glutamate; N-formimidoyl-L-glutamate from L-histidine: step 1/3. The polypeptide is Histidine ammonia-lyase (Bacillus cereus (strain 03BB102)).